A 290-amino-acid chain; its full sequence is MQVASVLSRGLPYIQRFTGKTVVIKYGGNAMENEDLKSSFARDVVLMKLVGINPIVVHGGGPQIGELLERLNIQSRFVNGMRVTDAETMDVVEMVLGGQVNKEIVSLINAHGGTAVGLTGKDANLIRARKLEVVNRSPELERPEIIDIGHVGEVASVNVDVIDMLTRSNVIPVIAPIGVGPDGASYNINADLVAGKVAEAMKAEKLILLTNVSGLKSKEDKVLTGLTAQQVNDLIEDGTIHGGMLPKIRCALSAVENGVRTSHIIDGRVAHACLLEIFTDEGVGTLISRN.

Residues 60–61 (GG), Arg82, and Asn187 contribute to the substrate site.

It belongs to the acetylglutamate kinase family. ArgB subfamily.

The protein resides in the cytoplasm. It carries out the reaction N-acetyl-L-glutamate + ATP = N-acetyl-L-glutamyl 5-phosphate + ADP. It participates in amino-acid biosynthesis; L-arginine biosynthesis; N(2)-acetyl-L-ornithine from L-glutamate: step 2/4. Functionally, catalyzes the ATP-dependent phosphorylation of N-acetyl-L-glutamate. The sequence is that of Acetylglutamate kinase from Marinobacter nauticus (strain ATCC 700491 / DSM 11845 / VT8) (Marinobacter aquaeolei).